The chain runs to 154 residues: Ribonuclease HI (154 aa).

Residues 1–142 (MPKQIEIFTD…CDELAKKGAE (142 aa)) form the RNase H type-1 domain. Residues aspartate 10, glutamate 48, aspartate 70, and aspartate 134 each coordinate Mg(2+).

It belongs to the RNase H family. As to quaternary structure, monomer. Mg(2+) is required as a cofactor.

It localises to the cytoplasm. It carries out the reaction Endonucleolytic cleavage to 5'-phosphomonoester.. Functionally, endonuclease that specifically degrades the RNA of RNA-DNA hybrids. The polypeptide is Ribonuclease HI (rnhA) (Haemophilus influenzae (strain ATCC 51907 / DSM 11121 / KW20 / Rd)).